The primary structure comprises 304 residues: Acetyl-coenzyme A carboxylase carboxyl transferase subunit beta (304 aa).

The 270-residue stretch at 23–292 folds into the CoA carboxyltransferase N-terminal domain; sequence VWTKCDSCGQ…PNPEAPREGV (270 aa). Zn(2+) is bound by residues Cys-27, Cys-30, Cys-46, and Cys-49. The C4-type zinc finger occupies 27 to 49; that stretch reads CDSCGQVLYRAELERNLEVCPKC. A disordered region spans residues 284 to 304; it reads NPEAPREGVVVPPVPDQEPEA. The span at 295 to 304 shows a compositional bias: pro residues; the sequence is PPVPDQEPEA.

Belongs to the AccD/PCCB family. As to quaternary structure, acetyl-CoA carboxylase is a heterohexamer composed of biotin carboxyl carrier protein (AccB), biotin carboxylase (AccC) and two subunits each of ACCase subunit alpha (AccA) and ACCase subunit beta (AccD). Zn(2+) is required as a cofactor.

The protein resides in the cytoplasm. It carries out the reaction N(6)-carboxybiotinyl-L-lysyl-[protein] + acetyl-CoA = N(6)-biotinyl-L-lysyl-[protein] + malonyl-CoA. Its pathway is lipid metabolism; malonyl-CoA biosynthesis; malonyl-CoA from acetyl-CoA: step 1/1. Its function is as follows. Component of the acetyl coenzyme A carboxylase (ACC) complex. Biotin carboxylase (BC) catalyzes the carboxylation of biotin on its carrier protein (BCCP) and then the CO(2) group is transferred by the transcarboxylase to acetyl-CoA to form malonyl-CoA. In Shigella flexneri, this protein is Acetyl-coenzyme A carboxylase carboxyl transferase subunit beta.